We begin with the raw amino-acid sequence, 390 residues long: GTPase Obg (390 aa).

The Obg domain maps to 1-159; that stretch reads MKFVDEASIL…RELLLELMLL (159 aa). A disordered region spans residues 127–147; that stretch reads NTRFKSSVNRTPRQKTNGTPG. Over residues 129 to 145 the composition is skewed to polar residues; it reads RFKSSVNRTPRQKTNGT. Residues 160 to 333 enclose the OBG-type G domain; sequence ADVGMLGMPN…LCWDVMTFII (174 aa). GTP is bound by residues 166–173, 191–195, 213–216, 283–286, and 314–316; these read GMPNAGKS, FTTLV, DIPG, NKID, and SAA. Residues Ser173 and Thr193 each contribute to the Mg(2+) site.

This sequence belongs to the TRAFAC class OBG-HflX-like GTPase superfamily. OBG GTPase family. Monomer. Mg(2+) is required as a cofactor.

The protein resides in the cytoplasm. Its function is as follows. An essential GTPase which binds GTP, GDP and possibly (p)ppGpp with moderate affinity, with high nucleotide exchange rates and a fairly low GTP hydrolysis rate. Plays a role in control of the cell cycle, stress response, ribosome biogenesis and in those bacteria that undergo differentiation, in morphogenesis control. The sequence is that of GTPase Obg from Escherichia coli O7:K1 (strain IAI39 / ExPEC).